The primary structure comprises 466 residues: Vacuolar-processing enzyme delta-isozyme (466 aa).

Positions 1-24 (MSSPLGHFQILVFLHALLIFSAES) are cleaved as a signal peptide. Asn137 carries an N-linked (GlcNAc...) asparagine glycan. His164 is an active-site residue. Cys206 (nucleophile) is an active-site residue. Cys239 and Cys253 are disulfide-bonded. Residue Asn322 is glycosylated (N-linked (GlcNAc...) asparagine). 2 cysteine pairs are disulfide-bonded: Cys417–Cys447 and Cys429–Cys464.

This sequence belongs to the peptidase C13 family. Auto-catalytic activation. As to expression, seed specific. Restricted to developing seeds at 7 days after anthesis, and, at lower levels, detected in flowers. Detected in siliques, specifically in seed coats (at protein level).

The protein resides in the secreted. It localises to the extracellular space. The protein localises to the cell wall. Its subcellular location is the vacuole. The catalysed reaction is Hydrolysis of proteins and small molecule substrates at -Asn-|-Xaa- bonds.. Its activity is regulated as follows. Strongly inhibited by biotin-YVAD-fmk (a caspase-1 inhibitor) and by Ac-DEVD-fmk. Its function is as follows. Asparagine-specific endopeptidase that may be involved in processing of proteins targeted to vacuoles. Probably involved in post-translational proteolysis of seed storage proteins in the protein storage vacuole of developing seeds. Exhibits a caspase-1-like activity in extracellular granules. At the early stage of seed development, required for the formation of the seed coat, by regulating cell death of specific cell layers in inner integument. This Arabidopsis thaliana (Mouse-ear cress) protein is Vacuolar-processing enzyme delta-isozyme.